Here is a 380-residue protein sequence, read N- to C-terminus: uncharacterized protein (380 aa).

Positions 1–28 (MQFLSDTQRMVLSRAVCASFFFFHVAVA) are cleaved as a signal peptide. The SPOR domain occupies 307 to 380 (AGDEKPRGYQ…DAGYETFPLF (74 aa)).

This is an uncharacterized protein from Treponema pallidum (strain Nichols).